The primary structure comprises 379 residues: Eukaryotic translation initiation factor 3 subunit M (379 aa).

Residues 179–341 (RSEEASKVMI…RKVIISSVAQ (163 aa)) enclose the PCI domain.

This sequence belongs to the eIF-3 subunit M family. In terms of assembly, component of the eukaryotic translation initiation factor 3 (eIF-3) complex.

It is found in the cytoplasm. Functionally, component of the eukaryotic translation initiation factor 3 (eIF-3) complex, which is involved in protein synthesis of a specialized repertoire of mRNAs and, together with other initiation factors, stimulates binding of mRNA and methionyl-tRNAi to the 40S ribosome. The eIF-3 complex specifically targets and initiates translation of a subset of mRNAs involved in cell proliferation. The polypeptide is Eukaryotic translation initiation factor 3 subunit M (Nematostella vectensis (Starlet sea anemone)).